A 79-amino-acid polypeptide reads, in one-letter code: Anti-insect Ac4 (79 aa).

An N-terminal signal peptide occupies residues Met1 to Asp17. Residues Gly18–Pro77 form the LCN-type CS-alpha/beta domain. 4 disulfide bridges follow: Cys26–Cys76, Cys30–Cys48, Cys34–Cys58, and Cys38–Cys60.

This sequence belongs to the long (4 C-C) scorpion toxin superfamily. Sodium channel inhibitor family. Alpha subfamily. In terms of tissue distribution, expressed by the venom gland.

The protein resides in the secreted. Functionally, alpha toxins bind voltage-independently at site-3 of sodium channels (Nav) and inhibit the inactivation of the activated channels, thereby blocking neuronal transmission. This protein is weakly toxic against insects (ED(50)&gt;2 ug per 100 mg of blowfly larvae), but is inactive against mammalian sodium channels (rNav1.2a, and rNav1.4). This is Anti-insect Ac4 from Androctonus crassicauda (Arabian fat-tailed scorpion).